Consider the following 263-residue polypeptide: MTMKATMTTPLVLKLGGALLQNETALEQLFTALSEYKSTCTSLILVHGGGCFVDDLLAKMNIESEKKNGLRITPASDIGYITGAYVGTANKVLMAQGIKLGFNVVGLTLADGGISTVTLSTAGLGAVGECEAGDPTLLTALLSGGFLPIISSIGIDAQGLLLNVNADQAATAICETLDADLVMLSDVAGILDADMQLIAEMNSHYADELIMAGVIHGGMEVKVKAALKAAASLNRDIKLASWKVPERLVALLNGEAEGSKVSS.

Substrate contacts are provided by residues 49 to 50 (GG), Arg71, and Asn163.

The protein belongs to the acetylglutamate kinase family. ArgB subfamily.

It localises to the cytoplasm. It catalyses the reaction N-acetyl-L-glutamate + ATP = N-acetyl-L-glutamyl 5-phosphate + ADP. Its pathway is amino-acid biosynthesis; L-arginine biosynthesis; N(2)-acetyl-L-ornithine from L-glutamate: step 2/4. Catalyzes the ATP-dependent phosphorylation of N-acetyl-L-glutamate. The sequence is that of Acetylglutamate kinase from Moritella abyssi.